We begin with the raw amino-acid sequence, 447 residues long: Chorismate synthase, chloroplastic (447 aa).

The interval 1-24 (MASSLSTKPFLSGSRRRSTTDGSG) is disordered. Residues 1 to 57 (MASSLSTKPFLSGSRRRSTTDGSGWSYFQTSDLRQLSNQSVQISVRRQTAPLKLVVQ) constitute a chloroplast transit peptide.

The protein belongs to the chorismate synthase family. Homotetramer. FMNH2 serves as cofactor. In terms of processing, the N-terminus is blocked.

The protein resides in the plastid. The protein localises to the chloroplast. The catalysed reaction is 5-O-(1-carboxyvinyl)-3-phosphoshikimate = chorismate + phosphate. The protein operates within metabolic intermediate biosynthesis; chorismate biosynthesis; chorismate from D-erythrose 4-phosphate and phosphoenolpyruvate: step 7/7. Its function is as follows. Catalyzes the last common step of the biosynthesis of aromatic amino acids, produced via the shikimic acid pathway. In Capnoides sempervirens (Rock-harlequin), this protein is Chorismate synthase, chloroplastic.